Consider the following 300-residue polypeptide: Acetylglutamate kinase (300 aa).

Substrate-binding positions include 73 to 74 (GG), arginine 95, and asparagine 197.

Belongs to the acetylglutamate kinase family. ArgB subfamily.

The protein localises to the cytoplasm. The catalysed reaction is N-acetyl-L-glutamate + ATP = N-acetyl-L-glutamyl 5-phosphate + ADP. The protein operates within amino-acid biosynthesis; L-arginine biosynthesis; N(2)-acetyl-L-ornithine from L-glutamate: step 2/4. Functionally, catalyzes the ATP-dependent phosphorylation of N-acetyl-L-glutamate. The chain is Acetylglutamate kinase from Bordetella parapertussis (strain 12822 / ATCC BAA-587 / NCTC 13253).